Reading from the N-terminus, the 175-residue chain is DELTA-stichotoxin-She4b (175 aa).

Residues 1–10 are plays an important role in the hemolytic activity; sequence ALAGTIIAGA. The tract at residues 9 to 28 is N-terminal region; the sequence is GASLTFQVLDKVLEELGKVS. Positions 52, 85, 103, 105, 131, 135, and 136 each coordinate phosphocholine. Positions 103-118 are trp-rich region, which is important for the binding to lipid membrane; it reads SVPFDYNWYSNWWDVK. The Cell attachment site, crucial for protein stability motif lies at 141 to 143; the sequence is RGD.

Octamer or nonamer in membranes. Monomer in the soluble state. Originally described as forming tetramer in the presence of a lipidic interface. Expressed in tentacles and mesenteric filaments.

The protein resides in the secreted. Its subcellular location is the nematocyst. It localises to the target cell membrane. In terms of biological role, pore-forming protein that forms cations-selective hydrophilic pores of around 1 nm and causes cardiac stimulation and cytolysis. Pore formation is a multi-step process that involves specific recognition of membrane sphingomyelin (but neither cholesterol nor phosphatidylcholine) using aromatic rich region and adjacent phosphocholine (POC) binding site, firm binding to the membrane (mainly driven by hydrophobic interactions) accompanied by the transfer of the N-terminal region to the lipid-water interface and finally pore formation after oligomerization of monomers. Cytolytic effects include red blood cells hemolysis, platelet aggregation and lysis, cytotoxic and cytostatic effects on fibroblasts. Lethality in mammals has been ascribed to severe vasospasm of coronary vessels, cardiac arrhythmia, and inotropic effects. This chain is DELTA-stichotoxin-She4b, found in Stichodactyla helianthus (Sun anemone).